We begin with the raw amino-acid sequence, 333 residues long: N-acetyl-gamma-glutamyl-phosphate reductase (333 aa).

Cys-145 is a catalytic residue.

Belongs to the NAGSA dehydrogenase family. Type 1 subfamily.

Its subcellular location is the cytoplasm. It carries out the reaction N-acetyl-L-glutamate 5-semialdehyde + phosphate + NADP(+) = N-acetyl-L-glutamyl 5-phosphate + NADPH + H(+). The protein operates within amino-acid biosynthesis; L-arginine biosynthesis; N(2)-acetyl-L-ornithine from L-glutamate: step 3/4. Its function is as follows. Catalyzes the NADPH-dependent reduction of N-acetyl-5-glutamyl phosphate to yield N-acetyl-L-glutamate 5-semialdehyde. The chain is N-acetyl-gamma-glutamyl-phosphate reductase from Salinispora arenicola (strain CNS-205).